The following is a 31-amino-acid chain: Cycloviolacin-O25 (31 aa).

Positions 1 to 31 (DIFCGETCAFIPCITHVPGTCSCKSKVCYFN) form a cross-link, cyclopeptide (Asp-Asn). Intrachain disulfides connect Cys-4-Cys-21, Cys-8-Cys-23, and Cys-13-Cys-28.

In terms of processing, this is a cyclic peptide. In terms of tissue distribution, expressed in roots and runners but not in leaves, petals and petioles (at protein level).

Functionally, probably participates in a plant defense mechanism. This is Cycloviolacin-O25 from Viola odorata (Sweet violet).